Reading from the N-terminus, the 550-residue chain is Hydroxylamine reductase (550 aa).

Residues Cys3, Cys6, Cys18, and Cys25 each coordinate [2Fe-2S] cluster. Positions 249, 273, 317, 405, 433, 458, 492, and 494 each coordinate hybrid [4Fe-2O-2S] cluster. Cys405 carries the post-translational modification Cysteine persulfide.

The protein belongs to the HCP family. [2Fe-2S] cluster is required as a cofactor. Hybrid [4Fe-2O-2S] cluster serves as cofactor.

It is found in the cytoplasm. It catalyses the reaction A + NH4(+) + H2O = hydroxylamine + AH2 + H(+). Inhibited by oxygen. Activated by cyanide except in the prolonged presence of excess cyanide, where the enzyme is inactivated. Functionally, catalyzes the reduction of hydroxylamine to form NH(3) and H(2)O. Is also able to reduce hydroxylamine analogs such as methylhydroxylamine and hydroxyquinone. Might have a role as a scavenger of potentially toxic by-products of nitrate metabolism. This chain is Hydroxylamine reductase, found in Escherichia coli (strain K12).